We begin with the raw amino-acid sequence, 703 residues long: Capsid vertex component 1 (703 aa).

Positions 200-246 are disordered; that stretch reads LGESASPRPQPLARPHAGAPADPPIVGASDPPISPEEQLTAPGGDTT.

Belongs to the herpesviridae CVC1 protein family. As to quaternary structure, interacts (via C-terminus) with capsid vertex component 2/CVC2.

It localises to the virion. It is found in the host nucleus. Its function is as follows. Capsid vertex-specific component that plays a role during viral DNA encapsidation, assuring correct genome cleavage and presumably stabilizing capsids that contain full-length viral genomes. This chain is Capsid vertex component 1, found in Human herpesvirus 1 (strain 17) (HHV-1).